A 278-amino-acid polypeptide reads, in one-letter code: Large ribosomal subunit protein uL2c (278 aa).

Disordered stretches follow at residues 32–56 and 203–256; these read SLTS…HRGG and QSIG…PTIG. The segment covering 209–220 has biased composition (basic residues); that stretch reads GSKRWQGKRPKV.

It belongs to the universal ribosomal protein uL2 family. Part of the 50S ribosomal subunit.

Its subcellular location is the plastid. It is found in the chloroplast. The protein is Large ribosomal subunit protein uL2c (rpl2) of Chara vulgaris (Common stonewort).